The following is a 462-amino-acid chain: GTPase HflX (462 aa).

Residues proline 255–proline 452 enclose the Hflx-type G domain. GTP contacts are provided by residues glycine 261 to serine 268, phenylalanine 286 to aspartate 290, aspartate 308 to glycine 311, asparagine 374 to aspartate 377, and serine 430 to tyrosine 432. Serine 268 and threonine 288 together coordinate Mg(2+).

It belongs to the TRAFAC class OBG-HflX-like GTPase superfamily. HflX GTPase family. Monomer. Associates with the 50S ribosomal subunit. The cofactor is Mg(2+).

Its subcellular location is the cytoplasm. In terms of biological role, GTPase that associates with the 50S ribosomal subunit and may have a role during protein synthesis or ribosome biogenesis. In Leptospira borgpetersenii serovar Hardjo-bovis (strain JB197), this protein is GTPase HflX.